Here is a 326-residue protein sequence, read N- to C-terminus: Probable cell division protein WhiA (326 aa).

The segment at residues 275–308 is a DNA-binding region (H-T-H motif); that stretch reads SLEELGQLSDPPLTKDAVAGRIRRLLAMADKKAS.

This sequence belongs to the WhiA family.

Involved in cell division and chromosome segregation. The chain is Probable cell division protein WhiA from Beutenbergia cavernae (strain ATCC BAA-8 / DSM 12333 / CCUG 43141 / JCM 11478 / NBRC 16432 / NCIMB 13614 / HKI 0122).